We begin with the raw amino-acid sequence, 211 residues long: Outer-membrane lipoprotein carrier protein (211 aa).

The N-terminal stretch at 1 to 25 (MRAIRMLLVSALTLGSLSATLSAHA) is a signal peptide.

The protein belongs to the LolA family. As to quaternary structure, monomer.

The protein localises to the periplasm. Its function is as follows. Participates in the translocation of lipoproteins from the inner membrane to the outer membrane. Only forms a complex with a lipoprotein if the residue after the N-terminal Cys is not an aspartate (The Asp acts as a targeting signal to indicate that the lipoprotein should stay in the inner membrane). The chain is Outer-membrane lipoprotein carrier protein from Pseudomonas putida (strain W619).